We begin with the raw amino-acid sequence, 545 residues long: Probable quinate permease (545 aa).

Over 1–22 (MSILSLVEDRPTPKEVYNWRIY) the chain is Cytoplasmic. The helical transmembrane segment at 23–43 (LLAAVASFTSCMIGYDSAFIG) threads the bilayer. Topologically, residues 44–66 (TTISLQSFKDEFNWDAMSTDKQN) are extracellular. The helical transmembrane segment at 67–87 (LISANIVSLYQAGAFFGAFFA) threads the bilayer. The Cytoplasmic portion of the chain corresponds to 88-97 (YPMGHFWGRR). A helical membrane pass occupies residues 98–118 (WGLFVAALVFTLGAGLMLGAN). The Extracellular segment spans residues 119–130 (GDRGLGLIYGGR). A helical transmembrane segment spans residues 131 to 151 (VLAGLGVGAGSNITPIYISEL). Topologically, residues 152–159 (APPAIRGR) are cytoplasmic. A helical transmembrane segment spans residues 160-180 (LVGVYELGWQIGGLVGFWICF). At 181–193 (GVDDTLAPSHKQW) the chain is on the extracellular side. A helical transmembrane segment spans residues 194–214 (IIPFAVQLIPSGLLLLGILFV). Topologically, residues 215–285 (RESPRWLFLR…VWSNKRIMYR (71 aa)) are cytoplasmic. A helical membrane pass occupies residues 286 to 306 (LFLGSMLFLWQNGSGINAINY). At 307–325 (YSPTVFKSIGLRGANTSLL) the chain is on the extracellular side. Residues 326 to 346 (TTGIFGVVKTVVTFVWLLWLI) traverse the membrane as a helical segment. The Cytoplasmic portion of the chain corresponds to 347 to 352 (DRLGRR). Residues 353 to 373 (LLLMIGAAGGSVCLWIVGAYI) form a helical membrane-spanning segment. Residues 374–384 (KVAKPTERDPD) lie on the Extracellular side of the membrane. The chain crosses the membrane as a helical span at residues 385-405 (APLDGGGIAAMFFFYLWTVFY). Residues 406–457 (TPSWNGTPWVMNSEMFDPNVRSLAQACAAGSNWLWNFLISRFTPQMFAKMEY) lie on the Cytoplasmic side of the membrane. Residues 458–478 (GVYFFFASLMILSIVFVFFLI) traverse the membrane as a helical segment. Residues 479-545 (PETKGIPLES…VEQAESVPKA (67 aa)) are Extracellular-facing. The interval 520–545 (IEESGYTKSDAQQVERVEQAESVPKA) is disordered.

Belongs to the major facilitator superfamily. Sugar transporter (TC 2.A.1.1) family. Interacts with creB. In terms of processing, ubiquitinated. Deubiquitinated by creB, probably to control its activity or amount.

Its subcellular location is the cell membrane. Functionally, integral membrane transporter that imports quinic acid to be catabolized as a carbon source. In Aspergillus terreus (strain NIH 2624 / FGSC A1156), this protein is Probable quinate permease (qutD).